We begin with the raw amino-acid sequence, 413 residues long: 3-isopropylmalate dehydratase large subunit (413 aa).

Residues Cys293, Cys353, and Cys356 each contribute to the [4Fe-4S] cluster site.

This sequence belongs to the aconitase/IPM isomerase family. LeuC type 2 subfamily. Heterodimer of LeuC and LeuD. [4Fe-4S] cluster serves as cofactor.

The catalysed reaction is (2R,3S)-3-isopropylmalate = (2S)-2-isopropylmalate. It functions in the pathway amino-acid biosynthesis; L-leucine biosynthesis; L-leucine from 3-methyl-2-oxobutanoate: step 2/4. Its function is as follows. Catalyzes the isomerization between 2-isopropylmalate and 3-isopropylmalate, via the formation of 2-isopropylmaleate. The chain is 3-isopropylmalate dehydratase large subunit from Picrophilus torridus (strain ATCC 700027 / DSM 9790 / JCM 10055 / NBRC 100828 / KAW 2/3).